The chain runs to 199 residues: Outer-membrane lipoprotein LolB (199 aa).

The N-terminal stretch at 1–28 is a signal peptide; it reads MSACPAPRSPFRWLHAFTLCLLLAVLAG. A lipid anchor (N-palmitoyl cysteine) is attached at C29. C29 carries the S-diacylglycerol cysteine lipid modification.

The protein belongs to the LolB family. Monomer.

It localises to the cell outer membrane. In terms of biological role, plays a critical role in the incorporation of lipoproteins in the outer membrane after they are released by the LolA protein. The chain is Outer-membrane lipoprotein LolB from Bordetella bronchiseptica (strain ATCC BAA-588 / NCTC 13252 / RB50) (Alcaligenes bronchisepticus).